Here is a 244-residue protein sequence, read N- to C-terminus: 1-(5-phosphoribosyl)-5-[(5-phosphoribosylamino)methylideneamino] imidazole-4-carboxamide isomerase (244 aa).

Asp8 functions as the Proton acceptor in the catalytic mechanism. The active-site Proton donor is the Asp129.

The protein belongs to the HisA/HisF family.

Its subcellular location is the cytoplasm. The enzyme catalyses 1-(5-phospho-beta-D-ribosyl)-5-[(5-phospho-beta-D-ribosylamino)methylideneamino]imidazole-4-carboxamide = 5-[(5-phospho-1-deoxy-D-ribulos-1-ylimino)methylamino]-1-(5-phospho-beta-D-ribosyl)imidazole-4-carboxamide. It participates in amino-acid biosynthesis; L-histidine biosynthesis; L-histidine from 5-phospho-alpha-D-ribose 1-diphosphate: step 4/9. The sequence is that of 1-(5-phosphoribosyl)-5-[(5-phosphoribosylamino)methylideneamino] imidazole-4-carboxamide isomerase from Thermodesulfovibrio yellowstonii (strain ATCC 51303 / DSM 11347 / YP87).